The following is a 461-amino-acid chain: Bifunctional protein GlmU (461 aa).

Positions 1 to 235 are pyrophosphorylase; the sequence is MTDTRKQRAA…EDDLIGCDSK (235 aa). UDP-N-acetyl-alpha-D-glucosamine-binding positions include 13 to 16, K27, Q80, 85 to 86, 108 to 110, G146, E161, and N176; these read LAAG, GT, and YGD. A Mg(2+)-binding site is contributed by D110. The tract at residues 236–256 is linker; it reads ADLAEAEAIFQQKRRRALMEA. The tract at residues 257-461 is N-acetyltransferase; it reads GVTMVAPETV…ARTTDQNKKG (205 aa). 2 residues coordinate UDP-N-acetyl-alpha-D-glucosamine: R322 and K340. Catalysis depends on H352, which acts as the Proton acceptor. UDP-N-acetyl-alpha-D-glucosamine-binding residues include Y355 and N366. Residues A369, 375–376, S394, S412, and R429 each bind acetyl-CoA; that span reads NY.

This sequence in the N-terminal section; belongs to the N-acetylglucosamine-1-phosphate uridyltransferase family. In the C-terminal section; belongs to the transferase hexapeptide repeat family. In terms of assembly, homotrimer. Requires Mg(2+) as cofactor.

Its subcellular location is the cytoplasm. The enzyme catalyses alpha-D-glucosamine 1-phosphate + acetyl-CoA = N-acetyl-alpha-D-glucosamine 1-phosphate + CoA + H(+). The catalysed reaction is N-acetyl-alpha-D-glucosamine 1-phosphate + UTP + H(+) = UDP-N-acetyl-alpha-D-glucosamine + diphosphate. It participates in nucleotide-sugar biosynthesis; UDP-N-acetyl-alpha-D-glucosamine biosynthesis; N-acetyl-alpha-D-glucosamine 1-phosphate from alpha-D-glucosamine 6-phosphate (route II): step 2/2. It functions in the pathway nucleotide-sugar biosynthesis; UDP-N-acetyl-alpha-D-glucosamine biosynthesis; UDP-N-acetyl-alpha-D-glucosamine from N-acetyl-alpha-D-glucosamine 1-phosphate: step 1/1. The protein operates within bacterial outer membrane biogenesis; LPS lipid A biosynthesis. Catalyzes the last two sequential reactions in the de novo biosynthetic pathway for UDP-N-acetylglucosamine (UDP-GlcNAc). The C-terminal domain catalyzes the transfer of acetyl group from acetyl coenzyme A to glucosamine-1-phosphate (GlcN-1-P) to produce N-acetylglucosamine-1-phosphate (GlcNAc-1-P), which is converted into UDP-GlcNAc by the transfer of uridine 5-monophosphate (from uridine 5-triphosphate), a reaction catalyzed by the N-terminal domain. The protein is Bifunctional protein GlmU of Hyphomonas neptunium (strain ATCC 15444).